A 73-amino-acid chain; its full sequence is Guanine nucleotide-binding protein G(I)/G(S)/G(O) subunit gamma-11 (73 aa).

Residues 51–73 form a disordered region; the sequence is DPLVKGIPEDKNPFKEKGSCVIS. Cys-70 carries the cysteine methyl ester modification. Cys-70 carries the S-farnesyl cysteine lipid modification. The propeptide at 71 to 73 is removed in mature form; it reads VIS.

This sequence belongs to the G protein gamma family. In terms of assembly, g proteins are composed of 3 units, alpha, beta and gamma. Interacts with beta-1 and beta-3, but not with beta-2. As to expression, abundantly expressed in all tissues tested except for brain.

It is found in the cell membrane. Functionally, guanine nucleotide-binding proteins (G proteins) are involved as a modulator or transducer in various transmembrane signaling systems. The beta and gamma chains are required for the GTPase activity, for replacement of GDP by GTP, and for G protein-effector interaction. The protein is Guanine nucleotide-binding protein G(I)/G(S)/G(O) subunit gamma-11 (GNG11) of Homo sapiens (Human).